Consider the following 1416-residue polypeptide: DNA-directed RNA polymerase subunit beta' (1416 aa).

The Zn(2+) site is built by Cys68, Cys70, Cys83, and Cys86. Mg(2+) is bound by residues Asp458, Asp460, and Asp462. Zn(2+) contacts are provided by Cys811, Cys884, Cys891, and Cys894.

The protein belongs to the RNA polymerase beta' chain family. The RNAP catalytic core consists of 2 alpha, 1 beta, 1 beta' and 1 omega subunit. When a sigma factor is associated with the core the holoenzyme is formed, which can initiate transcription. Requires Mg(2+) as cofactor. Zn(2+) is required as a cofactor.

It carries out the reaction RNA(n) + a ribonucleoside 5'-triphosphate = RNA(n+1) + diphosphate. Functionally, DNA-dependent RNA polymerase catalyzes the transcription of DNA into RNA using the four ribonucleoside triphosphates as substrates. This is DNA-directed RNA polymerase subunit beta' from Francisella philomiragia subsp. philomiragia (strain ATCC 25017 / CCUG 19701 / FSC 153 / O#319-036).